Consider the following 372-residue polypeptide: Glutamate 5-kinase (372 aa).

Residue Lys-14 coordinates ATP. 3 residues coordinate substrate: Ser-54, Asp-141, and Asn-153. 173–174 contributes to the ATP binding site; that stretch reads TD. The 79-residue stretch at 280 to 358 folds into the PUA domain; it reads RGRVIIDAGA…SEIESVLGHL (79 aa).

Belongs to the glutamate 5-kinase family.

The protein resides in the cytoplasm. It carries out the reaction L-glutamate + ATP = L-glutamyl 5-phosphate + ADP. It participates in amino-acid biosynthesis; L-proline biosynthesis; L-glutamate 5-semialdehyde from L-glutamate: step 1/2. Catalyzes the transfer of a phosphate group to glutamate to form L-glutamate 5-phosphate. This chain is Glutamate 5-kinase, found in Cupriavidus metallidurans (strain ATCC 43123 / DSM 2839 / NBRC 102507 / CH34) (Ralstonia metallidurans).